A 145-amino-acid polypeptide reads, in one-letter code: MNNVQFSERQISAFSHEYKIRRKRQMLRFFCATALTLVSCRVAYRGMLGRKYIPNMFQLNYKPPPFSYKGEAASALVLGTGLATGGLTMMVFGGCWIADISTFPEFSYKLKRLMGQESDSSQLPMDTETSQIVNQLEQLLNNDKK.

Transmembrane regions (helical) follow at residues 26–48 (MLRF…RGML) and 76–98 (LVLG…CWIA).

It belongs to the AIM11 family.

The protein localises to the membrane. The polypeptide is Altered inheritance of mitochondria protein 11 (AIM11) (Zygosaccharomyces rouxii (strain ATCC 2623 / CBS 732 / NBRC 1130 / NCYC 568 / NRRL Y-229)).